A 691-amino-acid chain; its full sequence is Elongation factor G (691 aa).

The 275-residue stretch at 8–282 (ERVRNIGIAA…AVVDYLPAPV (275 aa)) folds into the tr-type G domain. Residues 17 to 24 (AHIDAGKT), 81 to 85 (DTPGH), and 135 to 138 (NKMD) each bind GTP.

The protein belongs to the TRAFAC class translation factor GTPase superfamily. Classic translation factor GTPase family. EF-G/EF-2 subfamily.

Its subcellular location is the cytoplasm. In terms of biological role, catalyzes the GTP-dependent ribosomal translocation step during translation elongation. During this step, the ribosome changes from the pre-translocational (PRE) to the post-translocational (POST) state as the newly formed A-site-bound peptidyl-tRNA and P-site-bound deacylated tRNA move to the P and E sites, respectively. Catalyzes the coordinated movement of the two tRNA molecules, the mRNA and conformational changes in the ribosome. In Prochlorococcus marinus (strain MIT 9515), this protein is Elongation factor G.